Here is a 138-residue protein sequence, read N- to C-terminus: Large ribosomal subunit protein uL16 (138 aa).

Residues 1 to 15 are compositionally biased toward basic residues; that stretch reads MLSPRKVKYRKKQRG. The interval 1-20 is disordered; it reads MLSPRKVKYRKKQRGRLSGE.

Belongs to the universal ribosomal protein uL16 family. Part of the 50S ribosomal subunit.

Binds 23S rRNA and is also seen to make contacts with the A and possibly P site tRNAs. This is Large ribosomal subunit protein uL16 from Borrelia turicatae (strain 91E135).